Consider the following 148-residue polypeptide: MFRGATSLNMDAKGRLAVPAKHRDALHAQSEGNLVLTAHPHRCLLLYPLPAWEPIQSKIMALSSFDRQSSALQRLLVGFAEDVELDGAGRLLVSPVLREFAGFEKQVMLVGQGSHFELWSMEAWRAQLQQVMSAESVELPDELEGFSL.

2 SpoVT-AbrB domains span residues 5 to 51 and 80 to 123; these read ATSL…PLPA and AEDV…SMEA.

This sequence belongs to the MraZ family. As to quaternary structure, forms oligomers.

It localises to the cytoplasm. It is found in the nucleoid. This is Transcriptional regulator MraZ from Methylobacillus flagellatus (strain ATCC 51484 / DSM 6875 / VKM B-1610 / KT).